Here is a 370-residue protein sequence, read N- to C-terminus: MIPGNDPILLTPGPLTTSPATRHAMLRDWGSWDAAFNRMTQSVCTDLIEIVHGENEYVCVPLQGSGTFAVEAALGTLVPRDGRVLVPNNGAYCARIVKVLQRLGIAHVELPLREDAPVTAAAIEDAFNRDPRITHVAQVHLETSAGLLNPLDEIAAVCKHYGKSLIVDAMSSFGALPIDLRRGGIDALVSASGKCLEGVPGMGFVIVRRSALEACEGRSPSLALDLYDQFAYMQKTTQWRFTPPTHVLAALRTALDQFIAEGGQPARGARYARNCAALVDGMKALGFETFLTADVQAPVIVTFHAPRDPKWQFAEFYAAVREAGYVLYPGKLTQVETFRVGCIGSIGTNEMHDAVAAIGRTLIRLGIRVK.

An N6-(pyridoxal phosphate)lysine modification is found at Lys-194.

It belongs to the class-V pyridoxal-phosphate-dependent aminotransferase family. PhnW subfamily. Homodimer. It depends on pyridoxal 5'-phosphate as a cofactor.

The catalysed reaction is (2-aminoethyl)phosphonate + pyruvate = phosphonoacetaldehyde + L-alanine. Involved in phosphonate degradation. This is 2-aminoethylphosphonate--pyruvate transaminase from Paraburkholderia phymatum (strain DSM 17167 / CIP 108236 / LMG 21445 / STM815) (Burkholderia phymatum).